A 620-amino-acid chain; its full sequence is Glutathione-regulated potassium-efflux system protein KefC (620 aa).

12 helical membrane passes run 4-24, 26-46, 54-74, 90-110, 114-134, 149-169, 178-198, 218-238, 270-290, 294-314, 327-347, and 359-379; these read HTLM…PIAV, LGLG…PWGL, SILH…GLEL, GALQ…FLGL, VAEL…MQAM, FAVL…IPLL, LGAF…VVLL, VFSA…EEVG, GLLL…GTLV, LRIL…LWLI, WFAV…GAAQ, and ALTL…VLLT. The region spanning 399-518 is the RCK N-terminal domain; sequence QPRVIVAGFG…AGVAMPERET (120 aa). Positions 599 to 620 are disordered; it reads QGTAEGKHTGDIADEPQVKPST.

This sequence belongs to the monovalent cation:proton antiporter 2 (CPA2) transporter (TC 2.A.37) family. KefC subfamily. In terms of assembly, homodimer. Interacts with the regulatory subunit KefF.

The protein resides in the cell inner membrane. Its function is as follows. Pore-forming subunit of a potassium efflux system that confers protection against electrophiles. Catalyzes K(+)/H(+) antiport. In Salmonella arizonae (strain ATCC BAA-731 / CDC346-86 / RSK2980), this protein is Glutathione-regulated potassium-efflux system protein KefC.